A 928-amino-acid chain; its full sequence is MYKLNVISLIILTTCSGAAYASTPDFPQHHKTVFGTVTIEKTTADKMTIKQGSDKAQIDWKSFDIGQKKEVKFEQPNEHAVAYNRVIGGNASQIQGKLTANGKVYLANPNGVIITQGAEINVAGLLATTKDLERISENSNSYQFTRRTKDRQVLKEGLVLKDGQVVKEGQVINEGNITAQDFVVLNGDEVINKGNINVEKNSTINGKVYLSSGYNFTFTLPDSGISVALEDNTVQGIVKNEGSIKAGEITLSAKGRKQALDSLVMNNGVLEATKVSNKNGKVVLSADNVELNNESNIKGEIVTFGADVTSNKELKDNIKITSKTGSKVTSPKINFTGKSVNINGNFGREDSTTHYKDEFKKLNTEVNIDVPDNENIRIADIEDNTGTGTTGTGTSSFIQTGALSSLLANNGKVNLKGNNVNISGRIHIDSFRGSDSLLKLTNKGHIDINNADIHSKGRLFFITSLQNEEDFKSNITITDSKINLGNGAMGLGRSVDEKDYDNRWQKTEGSQRKKFDVKMSNVEFNQVDDVILAGGFEKVNLDKIVATGQTNFYIDGGVSRNGRKYEYGVLDLDKRTQLSELNQGRRRWGYYYDLELDMNRAYLYRFDLFATKNTGRSTIKDTEINISNSNINLKNGFVHLLAEKIKLDNSKIDITFDKDNSQDTLAQTNRLGMNGKVSMINSHIKIVGDEKEGISPTGTYATMFLIGELIGEKSSIFVKSHQGYTFKTDGNTKIAGKYSKEDLKITAINTGGRAAEEVLINGALGSADNDANIANMAFTIGDSANTKTTIENADITALAPNGGTAYLSSKDVEIEVKPNSNFTFFELPREKNLNQTKINGASTKLSERGFARLYDKINGVRASNLSAEQLNVTDASEKIINTKLVSSLDVEKLVSVAVCDAGNGCEEQQFGDKGNNTKVSVGELEAEQ.

An N-terminal signal peptide occupies residues 1 to 21 (MYKLNVISLIILTTCSGAAYA). 10 consecutive repeat copies span residues 101–106 (NGKVYL), 149–154 (KDRQVL), 155–160 (KEGLVL), 161–166 (KDGQVV), 167–172 (KEGQVI), 205–210 (NGKVYL), 279–284 (NGKVVL), 410–415 (NGKVNL), 635–640 (NGFVHL), and 674–679 (NGKVSM). Residues 101-679 (NGKVYLANPN…RLGMNGKVSM (579 aa)) are 6 X 6 AA approximate repeats. Positions 149-172 (KDRQVLKEGLVLKDGQVVKEGQVI) are 4 X 6 AA approximate tandem repeats.

It localises to the secreted. Its function is as follows. Binds heme/hemopexin complexes. In Haemophilus influenzae, this protein is Heme/hemopexin-binding protein (hxuA).